Here is a 236-residue protein sequence, read N- to C-terminus: Small ribosomal subunit protein uS2c (236 aa).

Belongs to the universal ribosomal protein uS2 family.

It is found in the plastid. The protein resides in the chloroplast. The protein is Small ribosomal subunit protein uS2c (rps2) of Oryza sativa (Rice).